The following is a 387-amino-acid chain: 1-deoxy-D-xylulose 5-phosphate reductoisomerase (387 aa).

Residues Thr-10, Gly-11, Ser-12, Ile-13, Gly-36, Asn-38, and Asn-122 each coordinate NADPH. Lys-123 is a binding site for 1-deoxy-D-xylulose 5-phosphate. Glu-124 contributes to the NADPH binding site. Asp-148 contributes to the Mn(2+) binding site. 1-deoxy-D-xylulose 5-phosphate-binding residues include Ser-149, Glu-150, Ser-174, and His-197. Glu-150 contacts Mn(2+). Gly-203 provides a ligand contact to NADPH. 4 residues coordinate 1-deoxy-D-xylulose 5-phosphate: Ser-210, Asn-215, Lys-216, and Glu-219. Position 219 (Glu-219) interacts with Mn(2+).

This sequence belongs to the DXR family. The cofactor is Mg(2+). It depends on Mn(2+) as a cofactor.

It catalyses the reaction 2-C-methyl-D-erythritol 4-phosphate + NADP(+) = 1-deoxy-D-xylulose 5-phosphate + NADPH + H(+). It participates in isoprenoid biosynthesis; isopentenyl diphosphate biosynthesis via DXP pathway; isopentenyl diphosphate from 1-deoxy-D-xylulose 5-phosphate: step 1/6. Its function is as follows. Catalyzes the NADPH-dependent rearrangement and reduction of 1-deoxy-D-xylulose-5-phosphate (DXP) to 2-C-methyl-D-erythritol 4-phosphate (MEP). The polypeptide is 1-deoxy-D-xylulose 5-phosphate reductoisomerase (Chloroherpeton thalassium (strain ATCC 35110 / GB-78)).